The sequence spans 604 residues: UvrABC system protein C (604 aa).

The 78-residue stretch at 14–91 (ESPGVYRMLD…IKEQRPPYNI (78 aa)) folds into the GIY-YIG domain. The UVR domain maps to 202-237 (EQVTAQLTRDMETASQALDFEEAARLRDQIQQLRRL). The disordered stretch occupies residues 538-557 (GHRQQRDKQRRTSTLQDIPG).

The protein belongs to the UvrC family. Interacts with UvrB in an incision complex.

Its subcellular location is the cytoplasm. Functionally, the UvrABC repair system catalyzes the recognition and processing of DNA lesions. UvrC both incises the 5' and 3' sides of the lesion. The N-terminal half is responsible for the 3' incision and the C-terminal half is responsible for the 5' incision. This Chromohalobacter salexigens (strain ATCC BAA-138 / DSM 3043 / CIP 106854 / NCIMB 13768 / 1H11) protein is UvrABC system protein C.